A 392-amino-acid chain; its full sequence is Bifunctional enzyme Fae/Hps (392 aa).

Residues 1–161 (MFQIGEALMG…EESNKSTHAI (161 aa)) form a formaldehyde-activating enzyme region. His-17 acts as the Proton donor in catalysis. Substrate is bound by residues Asp-19, Leu-48, Lys-66, Thr-68, and Gln-83. Residues 162-392 (MGFKVTRLWD…IDQFRVMTDF (231 aa)) are 3-hexulose-6-phosphate synthase.

The protein in the N-terminal section; belongs to the formaldehyde-activating enzyme family. This sequence in the C-terminal section; belongs to the HPS/KGPDC family. HPS subfamily.

The catalysed reaction is 5,6,7,8-tetrahydromethanopterin + formaldehyde = 5,10-methylenetetrahydromethanopterin + H2O. The enzyme catalyses D-ribulose 5-phosphate + formaldehyde = D-arabino-hex-3-ulose 6-phosphate. Its pathway is carbohydrate biosynthesis; D-ribose 5-phosphate biosynthesis. In terms of biological role, catalyzes the condensation of formaldehyde with tetrahydromethanopterin (H(4)MPT) to 5,10-methylenetetrahydromethanopterin. Catalyzes the reversible formation of ribulose-5-phosphate and formaldehyde from 3-hexulose-6-phosphate. This Methanosarcina barkeri (strain Fusaro / DSM 804) protein is Bifunctional enzyme Fae/Hps.